A 115-amino-acid chain; its full sequence is U3-lycotoxin-Ls1i (115 aa).

The N-terminal stretch at 1 to 20 is a signal peptide; it reads MKFVLLFGVFLVTLFSYSSA. A propeptide spanning residues 21 to 44 is cleaved from the precursor; sequence EMLDDFDQADEDELLSLIEKEEAR. 4 disulfides stabilise this stretch: Cys-48–Cys-63, Cys-55–Cys-72, Cys-62–Cys-87, and Cys-74–Cys-85.

It belongs to the neurotoxin 19 (CSTX) family. 01 subfamily. In terms of tissue distribution, expressed by the venom gland.

Its subcellular location is the secreted. The sequence is that of U3-lycotoxin-Ls1i from Lycosa singoriensis (Wolf spider).